The following is a 207-amino-acid chain: NADH-quinone oxidoreductase chain 5 (207 aa).

It belongs to the complex I 30 kDa subunit family. NDH-1 is composed of at least 14 different subunits, Nqo1 to Nqo14. The complex has a L-shaped structure, with the hydrophobic arm (subunits Nqo7, Nqo8, Nqo10 to Nqo14) embedded in the inner membrane and the hydrophilic peripheral arm (subunits Nqo1 to Nqo6, Nqo9) protruding into the bacterial cytoplasm. The hydrophilic domain contains all the redox centers.

The protein localises to the cell inner membrane. It carries out the reaction a quinone + NADH + 5 H(+)(in) = a quinol + NAD(+) + 4 H(+)(out). In terms of biological role, NDH-1 shuttles electrons from NADH, via FMN and iron-sulfur (Fe-S) centers, to quinones in the respiratory chain. The immediate electron acceptor for the enzyme in this species is believed to be ubiquinone. Couples the redox reaction to proton translocation (for every two electrons transferred, four hydrogen ions are translocated across the cytoplasmic membrane), and thus conserves the redox energy in a proton gradient. This Paracoccus denitrificans protein is NADH-quinone oxidoreductase chain 5 (nqo5).